A 180-amino-acid polypeptide reads, in one-letter code: Small ribosomal subunit protein eS10y (180 aa).

Residues 92–180 (LKKQQKPLGR…GGGAAGSDLP (89 aa)) are disordered. Residues 108-128 (DRPRGPPRGDGERRFGDRDGY) show a composition bias toward basic and acidic residues. The segment covering 152–180 (FRGGAGGARQGFGRGAGGFGGGAAGSDLP) has biased composition (gly residues).

It belongs to the eukaryotic ribosomal protein eS10 family.

Its subcellular location is the cytoplasm. The polypeptide is Small ribosomal subunit protein eS10y (RPS10B) (Arabidopsis thaliana (Mouse-ear cress)).